The primary structure comprises 532 residues: Flavin-containing monooxygenase 1 (532 aa).

The Lumenal portion of the chain corresponds to 1–510 (MVKRVAIVGA…TRTIQESPSS (510 aa)). FAD is bound by residues 9-13 (GAGVS), Glu32, 40-41 (LW), and 61-62 (NS). Residues 60–61 (SN) and 195–198 (SGTD) each bind NADP(+). Residues 511 to 531 (FETLLKLFSFLALLIAVFLIF) form a helical membrane-spanning segment. Leu532 is a topological domain (cytoplasmic).

It belongs to the FMO family. FAD serves as cofactor. As to expression, liver.

Its subcellular location is the endoplasmic reticulum membrane. It carries out the reaction hypotaurine + NADPH + O2 + H(+) = taurine + NADP(+) + H2O. The enzyme catalyses hypotaurine + NADH + O2 + H(+) = taurine + NAD(+) + H2O. The catalysed reaction is trimethylamine + NADPH + O2 = trimethylamine N-oxide + NADP(+) + H2O. It catalyses the reaction N,N-dimethylaniline + NADPH + O2 + H(+) = N,N-dimethylaniline N-oxide + NADP(+) + H2O. Functionally, broad spectrum monooxygenase that catalyzes the oxygenation of a wide variety of nitrogen- and sulfur-containing compounds including xenobiotics. Catalyzes the S-oxygenation of hypotaurine to produce taurine, an organic osmolyte involved in cell volume regulation as well as a variety of cytoprotective and developmental processes. In vitro, catalyzes the N-oxygenation of trimethylamine (TMA) to produce trimethylamine N-oxide (TMAO) and could therefore participate to the detoxification of this compound that is generated by the action of gut microbiota from dietary precursors such as choline, choline containing compounds, betaine or L-carnitine. In Mus musculus (Mouse), this protein is Flavin-containing monooxygenase 1.